The chain runs to 160 residues: MAEDKTYPMTEEGKVKLEKELEDLRINQRPEIINRIKIARSYGDLSENSEYESAKNEQSLLENRIKTVEHMLQYAEIIDSDKIDETEVSVGKIVTFKELPDEEPESYTIVGAAEADPMVGKISNDSPIAKGLIGHHVDEEVAINIPAGTMTVKILKVENA.

The stretch at 9 to 73 (MTEEGKVKLE…RIKTVEHMLQ (65 aa)) forms a coiled coil.

The protein belongs to the GreA/GreB family.

Its function is as follows. Necessary for efficient RNA polymerase transcription elongation past template-encoded arresting sites. The arresting sites in DNA have the property of trapping a certain fraction of elongating RNA polymerases that pass through, resulting in locked ternary complexes. Cleavage of the nascent transcript by cleavage factors such as GreA or GreB allows the resumption of elongation from the new 3'terminus. GreA releases sequences of 2 to 3 nucleotides. This chain is Transcription elongation factor GreA 2, found in Lactiplantibacillus plantarum (strain ATCC BAA-793 / NCIMB 8826 / WCFS1) (Lactobacillus plantarum).